A 37-amino-acid polypeptide reads, in one-letter code: Non-specific lipid-transfer protein P4 (37 aa).

It belongs to the plant LTP family.

The protein resides in the secreted. In terms of biological role, plant non-specific lipid-transfer proteins transfer phospholipids as well as galactolipids across membranes. May play a role in wax or cutin deposition in the cell walls of expanding epidermal cells and certain secretory tissues. This chain is Non-specific lipid-transfer protein P4, found in Vitis sp. (Grape).